We begin with the raw amino-acid sequence, 154 residues long: S-ribosylhomocysteine lyase (154 aa).

3 residues coordinate Fe cation: His57, His61, and Cys124.

It belongs to the LuxS family. Homodimer. Fe cation serves as cofactor.

It carries out the reaction S-(5-deoxy-D-ribos-5-yl)-L-homocysteine = (S)-4,5-dihydroxypentane-2,3-dione + L-homocysteine. In terms of biological role, involved in the synthesis of autoinducer 2 (AI-2) which is secreted by bacteria and is used to communicate both the cell density and the metabolic potential of the environment. The regulation of gene expression in response to changes in cell density is called quorum sensing. Catalyzes the transformation of S-ribosylhomocysteine (RHC) to homocysteine (HC) and 4,5-dihydroxy-2,3-pentadione (DPD). The protein is S-ribosylhomocysteine lyase of Exiguobacterium sibiricum (strain DSM 17290 / CCUG 55495 / CIP 109462 / JCM 13490 / 255-15).